A 147-amino-acid chain; its full sequence is Large ribosomal subunit protein uL15 (147 aa).

The tract at residues 21–49 (RVGRGEGSKGKTAGRGTKGTKARAPVRPG) is disordered.

The protein belongs to the universal ribosomal protein uL15 family. In terms of assembly, part of the 50S ribosomal subunit.

Functionally, binds to the 23S rRNA. The protein is Large ribosomal subunit protein uL15 of Tropheryma whipplei (strain TW08/27) (Whipple's bacillus).